The chain runs to 500 residues: Protein nucleotidyltransferase YdiU (500 aa).

G96, G98, R99, K119, D131, G132, R182, and R189 together coordinate ATP. D258 acts as the Proton acceptor in catalysis. Mg(2+) contacts are provided by N259 and D268. D268 lines the ATP pocket.

It belongs to the SELO family. Mg(2+) serves as cofactor. The cofactor is Mn(2+).

The catalysed reaction is L-seryl-[protein] + ATP = 3-O-(5'-adenylyl)-L-seryl-[protein] + diphosphate. The enzyme catalyses L-threonyl-[protein] + ATP = 3-O-(5'-adenylyl)-L-threonyl-[protein] + diphosphate. It carries out the reaction L-tyrosyl-[protein] + ATP = O-(5'-adenylyl)-L-tyrosyl-[protein] + diphosphate. It catalyses the reaction L-histidyl-[protein] + UTP = N(tele)-(5'-uridylyl)-L-histidyl-[protein] + diphosphate. The catalysed reaction is L-seryl-[protein] + UTP = O-(5'-uridylyl)-L-seryl-[protein] + diphosphate. The enzyme catalyses L-tyrosyl-[protein] + UTP = O-(5'-uridylyl)-L-tyrosyl-[protein] + diphosphate. Its function is as follows. Nucleotidyltransferase involved in the post-translational modification of proteins. It can catalyze the addition of adenosine monophosphate (AMP) or uridine monophosphate (UMP) to a protein, resulting in modifications known as AMPylation and UMPylation. The protein is Protein nucleotidyltransferase YdiU of Rhizobium johnstonii (strain DSM 114642 / LMG 32736 / 3841) (Rhizobium leguminosarum bv. viciae).